The sequence spans 115 residues: Large ribosomal subunit protein bL19 (115 aa).

The protein belongs to the bacterial ribosomal protein bL19 family.

In terms of biological role, this protein is located at the 30S-50S ribosomal subunit interface and may play a role in the structure and function of the aminoacyl-tRNA binding site. This is Large ribosomal subunit protein bL19 from Francisella tularensis subsp. tularensis (strain FSC 198).